A 240-amino-acid polypeptide reads, in one-letter code: Ribonuclease PH (240 aa).

Phosphate-binding positions include arginine 86 and 124 to 126 (GTR).

It belongs to the RNase PH family. As to quaternary structure, homohexameric ring arranged as a trimer of dimers.

It catalyses the reaction tRNA(n+1) + phosphate = tRNA(n) + a ribonucleoside 5'-diphosphate. In terms of biological role, phosphorolytic 3'-5' exoribonuclease that plays an important role in tRNA 3'-end maturation. Removes nucleotide residues following the 3'-CCA terminus of tRNAs; can also add nucleotides to the ends of RNA molecules by using nucleoside diphosphates as substrates, but this may not be physiologically important. Probably plays a role in initiation of 16S rRNA degradation (leading to ribosome degradation) during starvation. In Mannheimia succiniciproducens (strain KCTC 0769BP / MBEL55E), this protein is Ribonuclease PH.